Here is a 145-residue protein sequence, read N- to C-terminus: Mannitol-specific phosphotransferase enzyme IIA component (145 aa).

A PTS EIIA type-2 domain is found at 4–143 (TILSTETIKV…QEVLAFLGEV (140 aa)). The Tele-phosphohistidine intermediate role is filled by His64. His64 carries the phosphohistidine; by HPr modification.

It localises to the cytoplasm. Its function is as follows. The phosphoenolpyruvate-dependent sugar phosphotransferase system (sugar PTS), a major carbohydrate active transport system, catalyzes the phosphorylation of incoming sugar substrates concomitantly with their translocation across the cell membrane. The enzyme II CmtAB PTS system is involved in D-mannitol transport. The chain is Mannitol-specific phosphotransferase enzyme IIA component (mtlF) from Halalkalibacterium halodurans (strain ATCC BAA-125 / DSM 18197 / FERM 7344 / JCM 9153 / C-125) (Bacillus halodurans).